A 162-amino-acid polypeptide reads, in one-letter code: Caveolin-2 (162 aa).

Topologically, residues 1–86 (MGLETEKADV…FEISKYVLYK (86 aa)) are cytoplasmic. A Phosphotyrosine; by SRC modification is found at tyrosine 19. A phosphoserine mark is found at serine 20 and serine 23. The residue at position 27 (tyrosine 27) is a Phosphotyrosine; by SRC. At serine 36 the chain carries Phosphoserine. Residues 87 to 107 (FLTVFLAIPLAFVAGILFATL) constitute an intramembrane region (helical). Topologically, residues 108–162 (SCLHIWIIMPFVKTCLMVLPSVQTIWKSVTDVIIAPLCTSVGRSFSSISLRLSQD) are cytoplasmic.

It belongs to the caveolin family. Monomer or homodimer. Interacts with CAV1; the interaction forms a stable heterooligomeric complex that is required for targeting to lipid rafts and for caveolae formation. Tyrosine phosphorylated forms do not form heterooligomers with the Tyr-19-phosphorylated form existing as a monomer or dimer, and the Tyr-27-form as a monomer only. Interacts (tyrosine phosphorylated form) with the SH2 domain-containing proteins, RASA1, NCK1 and SRC. Interacts (tyrosine phosphorylated form) with INSR, the interaction (Tyr-27-phosphorylated form) is increased on insulin stimulation. Interacts (Tyr-19 phosphorylated form) with MAPK1 (phosphorylated form); the interaction, promoted by insulin, leads to nuclear location and MAPK1 activation. Interacts with STAT3; the interaction is increased on insulin-induced tyrosine phosphorylation leading to STAT activation. Phosphorylated on serine and tyrosine residues. CAV1 promotes phosphorylation on Ser-23 which then targets the complex to the plasma membrane, lipid rafts and caveolae. Phosphorylation on Ser-36 appears to modulate mitosis in endothelial cells. Phosphorylation on both Tyr-19 and Tyr-27 is required for insulin-induced 'Ser-727' phosphorylation of STAT3 and its activation. Phosphorylation on Tyr-19 is required for insulin-induced phosphorylation of MAPK1 and DNA binding of STAT3. Tyrosine phosphorylation is induced by both EGF and insulin (By. similarity).

The protein resides in the nucleus. Its subcellular location is the cytoplasm. It is found in the golgi apparatus membrane. The protein localises to the cell membrane. It localises to the membrane. The protein resides in the caveola. May act as a scaffolding protein within caveolar membranes. Interacts directly with G-protein alpha subunits and can functionally regulate their activity. Acts as an accessory protein in conjunction with CAV1 in targeting to lipid rafts and driving caveolae formation. The Ser-36 phosphorylated form has a role in modulating mitosis in endothelial cells. Positive regulator of cellular mitogenesis of the MAPK signaling pathway. Required for the insulin-stimulated nuclear translocation and activation of MAPK1 and STAT3, and the subsequent regulation of cell cycle progression. The protein is Caveolin-2 (CAV2) of Otolemur garnettii (Small-eared galago).